The following is a 119-amino-acid chain: Large ribosomal subunit protein bL20 (119 aa).

This sequence belongs to the bacterial ribosomal protein bL20 family.

Its function is as follows. Binds directly to 23S ribosomal RNA and is necessary for the in vitro assembly process of the 50S ribosomal subunit. It is not involved in the protein synthesizing functions of that subunit. This Rhodopseudomonas palustris (strain ATCC BAA-98 / CGA009) protein is Large ribosomal subunit protein bL20.